The following is a 215-amino-acid chain: Probable nicotinate-nucleotide adenylyltransferase (215 aa).

Belongs to the NadD family.

It catalyses the reaction nicotinate beta-D-ribonucleotide + ATP + H(+) = deamido-NAD(+) + diphosphate. Its pathway is cofactor biosynthesis; NAD(+) biosynthesis; deamido-NAD(+) from nicotinate D-ribonucleotide: step 1/1. Functionally, catalyzes the reversible adenylation of nicotinate mononucleotide (NaMN) to nicotinic acid adenine dinucleotide (NaAD). In Fervidobacterium nodosum (strain ATCC 35602 / DSM 5306 / Rt17-B1), this protein is Probable nicotinate-nucleotide adenylyltransferase.